Reading from the N-terminus, the 845-residue chain is Beta-mannosidase B (845 aa).

N252 carries an N-linked (GlcNAc...) asparagine glycan. Catalysis depends on E432, which acts as the Proton donor. N-linked (GlcNAc...) asparagine glycans are attached at residues N717 and N723.

Belongs to the glycosyl hydrolase 2 family. Beta-mannosidase B subfamily.

The enzyme catalyses Hydrolysis of terminal, non-reducing beta-D-mannose residues in beta-D-mannosides.. The protein operates within glycan metabolism; N-glycan degradation. Exoglycosidase that cleaves the single beta-linked mannose residue from the non-reducing end of beta-mannosidic oligosaccharides of various complexity and length. Prefers mannobiose over mannotriose and has no activity against polymeric mannan. Is also severely restricted by galactosyl substitutions at the +1 subsite. In Aspergillus fumigatus (strain ATCC MYA-4609 / CBS 101355 / FGSC A1100 / Af293) (Neosartorya fumigata), this protein is Beta-mannosidase B (mndB).